The chain runs to 482 residues: MGLLAYLLVILLILNVFFAAVTVFLERRDTSATWAWLLVLTFVPIFGFIIYLIFGRKLSGKKIFDWKGQEKIGIQESTANQIEMIRQKEFPFSDPNVKKHRDLIYLLLVNDGAILTQDNEVELFVDGHEKFDALIADIENAKDHIHLIYYIFHSDELGNRLMRVLERKAAEGLNVKIIYDAMGSRTTKKSFFRTFQKNGGLVRPFFPSKLPLINFRLNYRNHRKLAIIDGDVGYIGGFNIGDEYLGASKKFGYWRDTHLRVHGKAVYAMQTRFIMDWNSASSTHKIDYKARYFPTFHGKGHTSMQIVSSGPDSEWQQIKNGYIKMINAAKKTIYLQSPYFIPDASLLEAIKIAALSGVDVRVMIPNKPDHAFVYRATTNYAGELMETGAKIFIYDNGFIHAKTLVVDGEIASVGTANMDFRSFRLNFEVNAFIYEKQMVQKLEDAFLEDILKSYQLTPELYAKRSLWIKFKEAVSRLLSPIL.

2 helical membrane passes run 4 to 24 (LAYLLVILLILNVFFAAVTVF) and 34 to 54 (WAWLLVLTFVPIFGFIIYLIF). 2 PLD phosphodiesterase domains span residues 217–244 (LNYRNHRKLAIIDGDVGYIGGFNIGDEY) and 395–422 (DNGFIHAKTLVVDGEIASVGTANMDFRS). Active-site residues include histidine 222, lysine 224, aspartate 229, histidine 400, lysine 402, and aspartate 407.

This sequence belongs to the phospholipase D family. Cardiolipin synthase subfamily.

The protein resides in the cell membrane. It catalyses the reaction 2 a 1,2-diacyl-sn-glycero-3-phospho-(1'-sn-glycerol) = a cardiolipin + glycerol. Its function is as follows. Catalyzes the reversible phosphatidyl group transfer from one phosphatidylglycerol molecule to another to form cardiolipin (CL) (diphosphatidylglycerol) and glycerol. This Listeria monocytogenes serotype 4a (strain HCC23) protein is Cardiolipin synthase (cls).